The chain runs to 302 residues: Recombination-associated protein RdgC (302 aa).

It belongs to the RdgC family.

It is found in the cytoplasm. Its subcellular location is the nucleoid. Its function is as follows. May be involved in recombination. In Tolumonas auensis (strain DSM 9187 / NBRC 110442 / TA 4), this protein is Recombination-associated protein RdgC.